The following is a 384-amino-acid chain: MAFKKDKPVYIVDTTLRDGEQTAGVVFANNEKIRIAQMLDEIGIDQLEVGIPTMGGDEKETVAKIAKLGLKASIMAWNRAVVKDVQESLECGVDAVAISISTSDIHIEHKLKKTRQWVLDSMTEAVRFAKKEGVYVSVNAEDASRTDMNFLIEFARCAKQAGADRLRFCDTVGFLDPFKTYEMVKAIKDAVDIEIEMHTHNDFGMATANALAGVKAGAKFVGVTVNGLGERAGNAALEEVVMALKYVYKMDLGIDTSRFREISEYVALASGRPLPPSKAIVGKNVFAHESGIHVDGALKNPYTYEVFDPQEVGLERQIVIGKHSGTAALINKFKEYGRVLTEEEANLLLPHVRKMAIQLKRPLFDKELMYLYEDVIVKGKAKAI.

The Pyruvate carboxyltransferase domain occupies 9–260 (VYIVDTTLRD…DLGIDTSRFR (252 aa)). 4 residues coordinate Mn(2+): aspartate 18, histidine 198, histidine 200, and asparagine 234.

Belongs to the alpha-IPM synthase/homocitrate synthase family. LeuA type 1 subfamily. As to quaternary structure, homodimer. It depends on Mn(2+) as a cofactor.

Its subcellular location is the cytoplasm. The catalysed reaction is 3-methyl-2-oxobutanoate + acetyl-CoA + H2O = (2S)-2-isopropylmalate + CoA + H(+). The protein operates within amino-acid biosynthesis; L-leucine biosynthesis; L-leucine from 3-methyl-2-oxobutanoate: step 1/4. Its function is as follows. Catalyzes the condensation of the acetyl group of acetyl-CoA with 3-methyl-2-oxobutanoate (2-ketoisovalerate) to form 3-carboxy-3-hydroxy-4-methylpentanoate (2-isopropylmalate). This chain is 2-isopropylmalate synthase 2, found in Caldanaerobacter subterraneus subsp. tengcongensis (strain DSM 15242 / JCM 11007 / NBRC 100824 / MB4) (Thermoanaerobacter tengcongensis).